The following is a 281-amino-acid chain: ATP phosphoribosyltransferase (281 aa).

Belongs to the ATP phosphoribosyltransferase family. Long subfamily. Requires Mg(2+) as cofactor.

It is found in the cytoplasm. The enzyme catalyses 1-(5-phospho-beta-D-ribosyl)-ATP + diphosphate = 5-phospho-alpha-D-ribose 1-diphosphate + ATP. The protein operates within amino-acid biosynthesis; L-histidine biosynthesis; L-histidine from 5-phospho-alpha-D-ribose 1-diphosphate: step 1/9. Its activity is regulated as follows. Feedback inhibited by histidine. Its function is as follows. Catalyzes the condensation of ATP and 5-phosphoribose 1-diphosphate to form N'-(5'-phosphoribosyl)-ATP (PR-ATP). Has a crucial role in the pathway because the rate of histidine biosynthesis seems to be controlled primarily by regulation of HisG enzymatic activity. In Corynebacterium diphtheriae (strain ATCC 700971 / NCTC 13129 / Biotype gravis), this protein is ATP phosphoribosyltransferase.